Reading from the N-terminus, the 190-residue chain is Peptidyl-tRNA hydrolase (190 aa).

Tyrosine 14 is a tRNA binding site. The Proton acceptor role is filled by histidine 19. Residues tyrosine 64, asparagine 66, and asparagine 112 each contribute to the tRNA site.

Belongs to the PTH family. In terms of assembly, monomer.

The protein resides in the cytoplasm. It catalyses the reaction an N-acyl-L-alpha-aminoacyl-tRNA + H2O = an N-acyl-L-amino acid + a tRNA + H(+). Hydrolyzes ribosome-free peptidyl-tRNAs (with 1 or more amino acids incorporated), which drop off the ribosome during protein synthesis, or as a result of ribosome stalling. Functionally, catalyzes the release of premature peptidyl moieties from peptidyl-tRNA molecules trapped in stalled 50S ribosomal subunits, and thus maintains levels of free tRNAs and 50S ribosomes. The protein is Peptidyl-tRNA hydrolase of Chlorobium luteolum (strain DSM 273 / BCRC 81028 / 2530) (Pelodictyon luteolum).